Here is a 365-residue protein sequence, read N- to C-terminus: Galactoside alpha-(1,2)-fucosyltransferase 1 (365 aa).

Topologically, residues Met1–His8 are cytoplasmic. Residues Leu9–Phe25 form a helical; Signal-anchor for type II membrane protein membrane-spanning segment. Residues Leu26–Pro365 lie on the Lumenal side of the membrane. Asn65, Asn301, and Asn327 each carry an N-linked (GlcNAc...) asparagine glycan.

It belongs to the glycosyltransferase 11 family.

The protein localises to the golgi apparatus. The protein resides in the golgi stack membrane. It catalyses the reaction a beta-D-galactosyl-(1-&gt;4)-N-acetyl-beta-D-glucosaminyl derivative + GDP-beta-L-fucose = an alpha-L-Fuc-(1-&gt;2)-beta-D-Gal-(1-&gt;4)-beta-D-GlcNAc derivative + GDP + H(+). The enzyme catalyses a ganglioside GA1 + GDP-beta-L-fucose = a ganglioside Fuc-GA1 + GDP + H(+). It carries out the reaction a beta-D-Gal-(1-&gt;3)-beta-D-GlcNAc-(1-&gt;3)-beta-D-Gal-(1-&gt;4)-beta-D-Glc-(1&lt;-&gt;1')-Cer(d18:1(4E)) + GDP-beta-L-fucose = alpha-L-fucosyl-(1-&gt;2)- beta-D-galactosyl-(1-&gt;3)-N-acetyl-beta-D-glucosaminyl-(1-&gt;3)-beta-D-galactosyl-(1-&gt;4)-beta-D-glucosyl-(1&lt;-&gt;1')-N-acylsphing-4-enine + GDP + H(+). The catalysed reaction is a neolactoside nLc4Cer(d18:1(4E)) + GDP-beta-L-fucose = a neolactoside IV(2)-alpha-Fuc-nLc4Cer(d18:1(4E)) + GDP + H(+). It catalyses the reaction a ganglioside GM1 + GDP-beta-L-fucose = a ganglioside Fuc-GM1 + GDP + H(+). The enzyme catalyses beta-D-galactosyl-(1-&gt;3)-N-acetyl-D-galactosamine + GDP-beta-L-fucose = alpha-L-fucosyl-(1-&gt;2)-beta-D-galactosyl-(1-&gt;3)-N-acetyl-D-galactosamine + GDP + H(+). The protein operates within protein modification; protein glycosylation. Catalyzes the transfer of L-fucose, from a guanosine diphosphate-beta-L-fucose, to the terminal galactose residue of glycoconjugates through an alpha(1,2) linkage leading to H antigen synthesis that is an intermediate substrate in the synthesis of ABO blood group antigens. H antigen is essential for maturation of the glomerular layer of the main olfactory bulb, in cell migration and early cell-cell contacts during tumor associated angiogenesis. Preferentially fucosylates soluble lactose and to a lesser extent fucosylates glycolipids gangliosides GA1 and GM1a. In Leontocebus fuscicollis (Brown-mantled tamarin), this protein is Galactoside alpha-(1,2)-fucosyltransferase 1.